A 170-amino-acid polypeptide reads, in one-letter code: Adenine phosphoribosyltransferase (170 aa).

The protein belongs to the purine/pyrimidine phosphoribosyltransferase family. As to quaternary structure, homodimer.

It localises to the cytoplasm. It catalyses the reaction AMP + diphosphate = 5-phospho-alpha-D-ribose 1-diphosphate + adenine. It functions in the pathway purine metabolism; AMP biosynthesis via salvage pathway; AMP from adenine: step 1/1. Catalyzes a salvage reaction resulting in the formation of AMP, that is energically less costly than de novo synthesis. This Mycoplasmopsis pulmonis (strain UAB CTIP) (Mycoplasma pulmonis) protein is Adenine phosphoribosyltransferase.